Consider the following 225-residue polypeptide: Uridylate kinase (225 aa).

9-10 serves as a coordination point for ATP; sequence GS. A UMP-binding site is contributed by Gly-46. Residues Gly-47 and Arg-51 each contribute to the ATP site. UMP contacts are provided by residues Asp-67 and 115–121; that span reads THPAHTT. The ATP site is built by Thr-141, Asn-142, Tyr-147, and Asp-150.

The protein belongs to the UMP kinase family. In terms of assembly, homohexamer.

The protein resides in the cytoplasm. It catalyses the reaction UMP + ATP = UDP + ADP. The protein operates within pyrimidine metabolism; CTP biosynthesis via de novo pathway; UDP from UMP (UMPK route): step 1/1. Its activity is regulated as follows. Inhibited by UTP. In terms of biological role, catalyzes the reversible phosphorylation of UMP to UDP. In Methanococcus maripaludis (strain C6 / ATCC BAA-1332), this protein is Uridylate kinase.